Reading from the N-terminus, the 488-residue chain is MPPYLYRLPTTSLITFSAILNDPSSSYTTILSDATASRTKLHLALKGIADNEPGASALAVLDAVQIYLPYLKGIIACLDADELLFKGEPTFQWRAPLTHFSFSSPLLPLASIHSEHLMVVLTYALALSNYAHSILASLPAFEIPAGPKAMPHMSSEDEKRTTAGLARAVDLLCQASGVAEWAAENVCLQVEPLKGVSSGRLGKGKWPAESSRETFKALSMILLADAHLTAIRKLLFPVLTYTLFAPPGPPLPPNHPSAPLQAKLYLYVHQLYSSARALLSVHQQPTSSAPSNSSRKLFRSNTDKDVIEPEAVEGEIIPELKRYLAKEAQLALALAHKWLGIDAGENGKGAKVGEALAWVKDAQGRLEDLEDSKMRAKLKGLSIGKSRERKKEERRARMGRVERELEVVKAWVKAYQKMNDTVAFQPVPPVSSLVTPSGRPIFGPKAFIPPPSKFSPSRIGHLNEEQGNDSPELGETEDTSYAGKGNYF.

The region spanning 2–430 is the BRO1 domain; that stretch reads PPYLYRLPTT…TVAFQPVPPV (429 aa). The segment at 449-488 is disordered; the sequence is PPPSKFSPSRIGHLNEEQGNDSPELGETEDTSYAGKGNYF.

It belongs to the palC family.

Functionally, required for the proteolytic cleavage of the transcription factor RIM101 in response to alkaline ambient pH. The polypeptide is pH-response regulator protein palC (Cryptococcus neoformans var. neoformans serotype D (strain B-3501A) (Filobasidiella neoformans)).